The sequence spans 157 residues: Probable intracellular pathogenesis-related protein T1 (157 aa).

Residues N79 and N117 are each glycosylated (N-linked (GlcNAc...) asparagine).

Belongs to the BetVI family.

The chain is Probable intracellular pathogenesis-related protein T1 (PCKR3) from Catharanthus roseus (Madagascar periwinkle).